We begin with the raw amino-acid sequence, 272 residues long: MSRIDATLSALKSEKKTALIPYITAGDPHPDMTVNLMHSLVEQGADMIELGVPFSDPMADGPVIQKAVERALEHNVSLKNVLAYVTEFRKKDAQTPVILMGYLNPIEAMGSDVFAKAAAEAGVDAVLTVDMPPEESEGYFQDLSLAQLDRIFLVSPTTPDGRLNAVSEKGSGFVYYVSLKGVTGSKALDVDDVAQHVGHLREKMSMPVAIGFGIRDGNTAYEMAKLGDAIIVGSALVSLIEQNASEDSAVIQQVLSDKMREFRQAIDKADNE.

Catalysis depends on proton acceptor residues Glu-49 and Asp-60.

Belongs to the TrpA family. In terms of assembly, tetramer of two alpha and two beta chains.

It catalyses the reaction (1S,2R)-1-C-(indol-3-yl)glycerol 3-phosphate + L-serine = D-glyceraldehyde 3-phosphate + L-tryptophan + H2O. The protein operates within amino-acid biosynthesis; L-tryptophan biosynthesis; L-tryptophan from chorismate: step 5/5. The alpha subunit is responsible for the aldol cleavage of indoleglycerol phosphate to indole and glyceraldehyde 3-phosphate. The polypeptide is Tryptophan synthase alpha chain (Hydrogenovibrio crunogenus (strain DSM 25203 / XCL-2) (Thiomicrospira crunogena)).